Reading from the N-terminus, the 249-residue chain is 5'-nucleotidase SurE (249 aa).

Residues Asp-9, Asp-10, Ser-40, and Asn-92 each contribute to the a divalent metal cation site.

Belongs to the SurE nucleotidase family. A divalent metal cation is required as a cofactor.

It localises to the cytoplasm. It catalyses the reaction a ribonucleoside 5'-phosphate + H2O = a ribonucleoside + phosphate. In terms of biological role, nucleotidase that shows phosphatase activity on nucleoside 5'-monophosphates. The sequence is that of 5'-nucleotidase SurE from Shewanella sp. (strain MR-4).